We begin with the raw amino-acid sequence, 493 residues long: High affinity nitrate transporter 2.7 (493 aa).

A compositionally biased stretch (polar residues) spans 1–19 (MEPSQRNTKPPSFSDSTIP). The disordered stretch occupies residues 1-20 (MEPSQRNTKPPSFSDSTIPV). Transmembrane regions (helical) follow at residues 46–66 (WLSL…VPVI), 70–90 (LNLS…GSIF), 113–133 (FLTA…SFIL), 136–156 (FFVG…SSMF), 174–194 (VGAG…AEFL), 202–222 (VSFV…LLYG), 257–277 (FVEI…ALLY), 299–319 (FGVN…SNIA), 341–361 (LWGL…LGRV), 368–388 (ILVM…VFGV), 400–420 (VAGI…FLLF), and 431–451 (ISLM…IYFP).

Belongs to the major facilitator superfamily. Nitrate/nitrite porter (TC 2.A.1.8) family. In terms of tissue distribution, expressed in seeds, leaves and shoots. Lower expression in roots.

It localises to the vacuole membrane. In terms of biological role, involved in high-affinity nitrate transport. Controls nitrate content in seeds. The polypeptide is High affinity nitrate transporter 2.7 (NRT2.7) (Arabidopsis thaliana (Mouse-ear cress)).